The chain runs to 328 residues: Beta-ketoacyl-[acyl-carrier-protein] synthase III (328 aa).

Residues cysteine 122 and histidine 255 contribute to the active site. Residues 256 to 260 are ACP-binding; that stretch reads QANIR. The active site involves asparagine 285.

It belongs to the thiolase-like superfamily. FabH family. Homodimer.

It localises to the cytoplasm. The catalysed reaction is malonyl-[ACP] + acetyl-CoA + H(+) = 3-oxobutanoyl-[ACP] + CO2 + CoA. The protein operates within lipid metabolism; fatty acid biosynthesis. Catalyzes the condensation reaction of fatty acid synthesis by the addition to an acyl acceptor of two carbons from malonyl-ACP. Catalyzes the first condensation reaction which initiates fatty acid synthesis and may therefore play a role in governing the total rate of fatty acid production. Possesses both acetoacetyl-ACP synthase and acetyl transacylase activities. Its substrate specificity determines the biosynthesis of branched-chain and/or straight-chain of fatty acids. The protein is Beta-ketoacyl-[acyl-carrier-protein] synthase III of Janthinobacterium sp. (strain Marseille) (Minibacterium massiliensis).